Reading from the N-terminus, the 84-residue chain is Succinate dehydrogenase membrane anchor subunit (84 aa).

The Mitochondrial matrix segment spans residues 1–3 (MIT). A helical membrane pass occupies residues 4–24 (FQWLIVRVVALFISLTILIDI). Topologically, residues 25–31 (EMFVVML) are mitochondrial intermembrane. Residues 32-52 (SFLIIHISIGLKAIIHDYIHF) traverse the membrane as a helical segment. His-37 contributes to the heme binding site. Tyr-49 is a binding site for a ubiquinone. Residues 53–58 (QKIKLM) lie on the Mitochondrial matrix side of the membrane. A helical membrane pass occupies residues 59–81 (LLILLRVSAIEISRSFRTFYIII). Residues 82–84 (KNT) lie on the Mitochondrial intermembrane side of the membrane.

In terms of assembly, part of an enzyme complex containing four subunits: a flavoprotein, an iron-sulfur protein, plus two membrane-anchoring proteins. Heme serves as cofactor.

It localises to the mitochondrion inner membrane. It functions in the pathway carbohydrate metabolism; tricarboxylic acid cycle. In terms of biological role, membrane-anchoring subunit of succinate dehydrogenase (SDH). The chain is Succinate dehydrogenase membrane anchor subunit (SDH4) from Chondrus crispus (Carrageen Irish moss).